A 610-amino-acid chain; its full sequence is Elongation factor 4 (610 aa).

The tr-type G domain occupies 11-193 (EKIRNFSIIA…QIVEKVPAPT (183 aa)). Residues 23-28 (DHGKST) and 140-143 (NKID) contribute to the GTP site.

It belongs to the TRAFAC class translation factor GTPase superfamily. Classic translation factor GTPase family. LepA subfamily.

Its subcellular location is the cell membrane. It carries out the reaction GTP + H2O = GDP + phosphate + H(+). Required for accurate and efficient protein synthesis under certain stress conditions. May act as a fidelity factor of the translation reaction, by catalyzing a one-codon backward translocation of tRNAs on improperly translocated ribosomes. Back-translocation proceeds from a post-translocation (POST) complex to a pre-translocation (PRE) complex, thus giving elongation factor G a second chance to translocate the tRNAs correctly. Binds to ribosomes in a GTP-dependent manner. The sequence is that of Elongation factor 4 from Streptococcus pyogenes serotype M2 (strain MGAS10270).